A 65-amino-acid chain; its full sequence is Large ribosomal subunit protein bL35 (65 aa).

Belongs to the bacterial ribosomal protein bL35 family.

The sequence is that of Large ribosomal subunit protein bL35 from Aeromonas hydrophila subsp. hydrophila (strain ATCC 7966 / DSM 30187 / BCRC 13018 / CCUG 14551 / JCM 1027 / KCTC 2358 / NCIMB 9240 / NCTC 8049).